Reading from the N-terminus, the 249-residue chain is tRNA (guanine-N(7)-)-methyltransferase (249 aa).

The interval 1–24 is disordered; sequence MHSIPADTGHTPSRAPAGNGSPPA. 4 residues coordinate S-adenosyl-L-methionine: Glu-81, Glu-106, Asp-133, and Asp-156. Asp-156 is an active-site residue. A substrate-binding site is contributed by Lys-160. An interaction with RNA region spans residues 162-167; sequence RHNKRR. Substrate contacts are provided by residues Asp-192 and 227-230; that span reads TKFE.

This sequence belongs to the class I-like SAM-binding methyltransferase superfamily. TrmB family.

The enzyme catalyses guanosine(46) in tRNA + S-adenosyl-L-methionine = N(7)-methylguanosine(46) in tRNA + S-adenosyl-L-homocysteine. Its pathway is tRNA modification; N(7)-methylguanine-tRNA biosynthesis. In terms of biological role, catalyzes the formation of N(7)-methylguanine at position 46 (m7G46) in tRNA. This is tRNA (guanine-N(7)-)-methyltransferase from Paracidovorax citrulli (strain AAC00-1) (Acidovorax citrulli).